Here is a 464-residue protein sequence, read N- to C-terminus: MSIGKIIQVIGAVIDVEFQYNDIPNLYHALEVNIDNGNSHQVLILEVVQQLGRSIVRCIAMGSTNGLKRGLDVTNLKHGIQVPVGKETLGRVMDVLGNPIDMKGPINSIEKWSIHRSAPLYEELSSNQELLITGIKVIDLMCPFIKGGKIGLFGGAGVGKTVNIMELIRNIAIEHAGYSVFVGVGERIREGNDFYHEMIHSGILDKVALVYGQMNEPPGNRLRVALTGLTIAEKFRDEGHDVLLFIDNIYRYTLAGTEVSALLGRVPSAVGYQSTLSEEMGMLQERIASTKSGSITSVQAIYVPADDLTDPSPTTTFAHLDATIVLSRQIAALGIYPAVDPLDSYSKQLDPCIVGQEHYDIANNVKSILQRYQELKDIIAILGMDELSEEDKLIVLRSRKIQRFLSQPFFVAEVFTGFSGSYVSLEDTIAGFKEIIDGKYDHLPEQSFYMVGSVKEAIEKSKIL.

Glycine 154–threonine 161 lines the ATP pocket.

Belongs to the ATPase alpha/beta chains family. As to quaternary structure, F-type ATPases have 2 components, CF(1) - the catalytic core - and CF(0) - the membrane proton channel. CF(1) has five subunits: alpha(3), beta(3), gamma(1), delta(1), epsilon(1). CF(0) has three main subunits: a(1), b(2) and c(9-12). The alpha and beta chains form an alternating ring which encloses part of the gamma chain. CF(1) is attached to CF(0) by a central stalk formed by the gamma and epsilon chains, while a peripheral stalk is formed by the delta and b chains.

It localises to the cell inner membrane. It carries out the reaction ATP + H2O + 4 H(+)(in) = ADP + phosphate + 5 H(+)(out). Its function is as follows. Produces ATP from ADP in the presence of a proton gradient across the membrane. The catalytic sites are hosted primarily by the beta subunits. This is ATP synthase subunit beta from Blochmanniella floridana.